The sequence spans 904 residues: Alpha-actinin-4 (904 aa).

The interval 1-27 (MVDYHSAGQPYPYGGNGPGPNGDYMAQ) is disordered. The tract at residues 1–259 (MVDYHSAGQP…IMTYVSSFYH (259 aa)) is actin-binding. Calponin-homology (CH) domains are found at residues 43–147 (KQQR…LRFA) and 156–262 (TSAK…HAFS). Spectrin repeat units lie at residues 286–396 (HLME…WLLN), 406–511 (HLAE…ALEK), 521–632 (ELHL…ALQD), and 642–745 (RLRR…EVEN). 2 consecutive EF-hand domains span residues 758–793 (EQMQ…LGYD) and 799–834 (QGDA…ETTD). The Ca(2+) site is built by Asp-771, Asp-773, Glu-782, Asp-812, Asn-814, Ser-816, and Ser-818.

This sequence belongs to the alpha-actinin family. As to quaternary structure, homodimer; antiparallel. Component of the CART complex. May interact with nuclear receptors.

Its subcellular location is the nucleus. It localises to the cytoplasm. The protein resides in the cell junction. It is found in the perinuclear region. Its function is as follows. F-actin cross-linking protein which is thought to anchor actin to a variety of intracellular structures. This is a bundling protein. Probably involved in vesicular trafficking via its association with the CART complex. Involved in tight junction assembly in epithelial cells. May also function as a transcriptional coactivator, stimulating transcription mediated by nuclear hormone receptors. The sequence is that of Alpha-actinin-4 from Gallus gallus (Chicken).